Here is a 258-residue protein sequence, read N- to C-terminus: Thrombin-like enzyme CPI-enzyme 2 (258 aa).

A signal peptide spans 1 to 18; that stretch reads MVLIRVLANLLILQLSYA. Residues 19 to 24 constitute a propeptide that is removed on maturation; it reads QKSSEL. Positions 25 to 249 constitute a Peptidase S1 domain; sequence VIGGDECNIN…YTDWIENIIA (225 aa). 6 disulfides stabilise this stretch: C31–C163, C50–C66, C98–C256, C142–C210, C174–C189, and C200–C225. N-linked (GlcNAc...) asparagine glycosylation is present at N44. The active-site Charge relay system is the H65. N79 and N103 each carry an N-linked (GlcNAc...) asparagine glycan. D110 serves as the catalytic Charge relay system. An N-linked (GlcNAc...) asparagine glycan is attached at N121. Catalysis depends on S204, which acts as the Charge relay system.

This sequence belongs to the peptidase S1 family. Snake venom subfamily. As to quaternary structure, monomer. In terms of processing, N-glycosylated. In terms of tissue distribution, expressed by the venom gland.

The protein resides in the secreted. Its function is as follows. Thrombin-like snake venom serine protease that cleaves fibrinogen beta (FGB) releasing fibrinopeptide B. Promotes capillary permeability-increasing activity through the release of peptides from the beta-chain of fibrinogen. This is Thrombin-like enzyme CPI-enzyme 2 from Gloydius ussuriensis (Ussuri mamushi).